A 72-amino-acid chain; its full sequence is Hypertrehalosaemic prohormone (72 aa).

A signal peptide spans 1 to 21; the sequence is MNHLVKVLIVVVAIALVLCEA. Q22 carries the pyrrolidone carboxylic acid modification. Threonine amide is present on T31.

It belongs to the AKH/HRTH/RPCH family. As to expression, expressed in corpora cardiaca.

It is found in the secreted. In terms of biological role, hypertrehalosaemic factors are neuropeptides that elevate the level of trehalose in the hemolymph (trehalose is the major carbohydrate in the hemolymph of insects). In Blaberus discoidalis (Tropical cockroach), this protein is Hypertrehalosaemic prohormone.